The primary structure comprises 221 residues: Vesicle transport v-SNARE 13 (221 aa).

Residues 1–198 lie on the Cytoplasmic side of the membrane; it reads MSQGFERYER…MTRRMNRNKW (198 aa). The stretch at 32–93 forms a coiled coil; the sequence is EQKKQNLSEI…FKTEVKRITS (62 aa). Residues 199–219 form a helical; Anchor for type IV membrane protein membrane-spanning segment; it reads TIGAIITVLVLAIIFILYFKL. Residues 220 to 221 are Vesicular-facing; the sequence is TR.

It belongs to the VTI1 family. As to quaternary structure, forms SNARE complexes with t-SNAREs. In terms of tissue distribution, expressed at low levels in roots, stems, flowers and leaves.

It is found in the vacuole membrane. The protein localises to the prevacuolar compartment membrane. Its subcellular location is the endosome membrane. The protein resides in the early endosome membrane. May function as a v-SNARE responsible for targeting vesicles involved in the secretory pathway. Involved in actin-dependent endosomal trafficking pathways associated with the vacuole within root hairs and root tip epidermal cells. Essential for cell wall organization and polarized root hair growth. Also required for the localization of SYP41 to the trans-Golgi network in root hair cells. The polypeptide is Vesicle transport v-SNARE 13 (Arabidopsis thaliana (Mouse-ear cress)).